Consider the following 295-residue polypeptide: Protoheme IX farnesyltransferase (295 aa).

9 helical membrane passes run 9 to 29, 36 to 56, 80 to 100, 108 to 128, 135 to 155, 163 to 183, 209 to 229, 230 to 250, and 265 to 285; these read ITKPGIIFGNVLSVAGGFFLA, FGVFLAAVIGTSLVVASGCVF, LVSLKLALLYATLLGIAGVAL, LAALFAVIGFVIYVGFYSLYL, GTLVGSLSGAMPPVIGYCAVS, LTLLVMFSLWQMPHSYAIAIF, ILLYILAFLVATLMLTVGGYA, GLNYLAVAAGMGMYWLYMAWK, and FVFSIFTITALSVMMSVDFQV.

This sequence belongs to the UbiA prenyltransferase family. Protoheme IX farnesyltransferase subfamily.

The protein localises to the cell inner membrane. The enzyme catalyses heme b + (2E,6E)-farnesyl diphosphate + H2O = Fe(II)-heme o + diphosphate. It participates in porphyrin-containing compound metabolism; heme O biosynthesis; heme O from protoheme: step 1/1. In terms of biological role, converts heme B (protoheme IX) to heme O by substitution of the vinyl group on carbon 2 of heme B porphyrin ring with a hydroxyethyl farnesyl side group. In Pseudomonas syringae pv. tomato (strain ATCC BAA-871 / DC3000), this protein is Protoheme IX farnesyltransferase.